The following is a 545-amino-acid chain: Chaperonin GroEL (545 aa).

Residues 30 to 33 (TLGP), K51, 87 to 91 (DGTTT), G415, 479 to 481 (NAA), and D495 contribute to the ATP site.

It belongs to the chaperonin (HSP60) family. In terms of assembly, forms a cylinder of 14 subunits composed of two heptameric rings stacked back-to-back. Interacts with the co-chaperonin GroES.

Its subcellular location is the cytoplasm. It catalyses the reaction ATP + H2O + a folded polypeptide = ADP + phosphate + an unfolded polypeptide.. Functionally, together with its co-chaperonin GroES, plays an essential role in assisting protein folding. The GroEL-GroES system forms a nano-cage that allows encapsulation of the non-native substrate proteins and provides a physical environment optimized to promote and accelerate protein folding. The sequence is that of Chaperonin GroEL from Salmonella agona (strain SL483).